The chain runs to 266 residues: GFP-like fluorescent chromoprotein cFP484 (266 aa).

Residues 104-106 (QYG) constitute a cross-link (2-iminomethyl-5-imidazolinone (Gln-Gly)). Residue Tyr-105 is modified to 2,3-didehydrotyrosine.

Belongs to the GFP family. Post-translationally, contains a chromophore consisting of modified amino acid residues. The chromophore is formed by autocatalytic backbone condensation between Xaa-N and Gly-(N+2), oxidation of Tyr-(N+1) to didehydrotyrosine, and formation of a double bond to the alpha-amino nitrogen of residue Xaa-N. Maturation of the chromophore requires nothing other than molecular oxygen. The precise stereochemistry of the tyrosine has not been determined. As to expression, tentacle and oral disk.

Functionally, pigment protein that is green in color. The protein is GFP-like fluorescent chromoprotein cFP484 of Clavularia sp. (Brown star polyp).